Reading from the N-terminus, the 506-residue chain is Probable alpha-L-arabinofuranosidase B (506 aa).

The N-terminal stretch at Met-1–Ala-26 is a signal peptide. The interval Gly-27–Thr-343 is catalytic. 3 disulfides stabilise this stretch: Cys-29–Cys-39, Cys-89–Cys-94, and Cys-184–Cys-185. Asp-227 lines the substrate pocket. Catalysis depends on Glu-229, which acts as the Nucleophile. Substrate is bound at residue Asn-230. An N-linked (GlcNAc...) asparagine glycan is attached at Asn-240. Gly-304 is a binding site for substrate. The active-site Proton donor is the Asp-305. Residues Ala-344–Ala-506 form an ABD region. A disulfide bridge links Cys-409 with Cys-447. 7 residues coordinate substrate: His-424, Asn-426, Phe-427, Asp-443, His-471, Leu-476, and Asp-496.

This sequence belongs to the glycosyl hydrolase 54 family.

Its subcellular location is the secreted. It carries out the reaction Hydrolysis of terminal non-reducing alpha-L-arabinofuranoside residues in alpha-L-arabinosides.. Its pathway is glycan metabolism; L-arabinan degradation. In terms of biological role, alpha-L-arabinofuranosidase involved in the degradation of arabinoxylan, a major component of plant hemicellulose. Able to hydrolyze 1,5-, 1,3- and 1,2-alpha-linkages not only in L-arabinofuranosyl oligosaccharides, but also in polysaccharides containing terminal non-reducing L-arabinofuranoses in side chains, like L-arabinan, arabinogalactan and arabinoxylan. In Aspergillus fumigatus (strain ATCC MYA-4609 / CBS 101355 / FGSC A1100 / Af293) (Neosartorya fumigata), this protein is Probable alpha-L-arabinofuranosidase B (abfB).